A 403-amino-acid chain; its full sequence is Probable eukaryotic initiation factor 4A (403 aa).

The tract at residues methionine 1–aspartate 29 is disordered. A Q motif motif is present at residues proline 26–glutamine 54. A Helicase ATP-binding domain is found at isoleucine 57 to isoleucine 230. Alanine 70–threonine 77 provides a ligand contact to ATP. A DEAD box motif is present at residues aspartate 178–aspartate 181. The region spanning glycine 241 to leucine 401 is the Helicase C-terminal domain.

This sequence belongs to the DEAD box helicase family. eIF4A subfamily. As to quaternary structure, eIF4F is a multi-subunit complex, the composition of which varies with external and internal environmental conditions. It is composed of at least EIF4A, EIF4E and EIF4G.

It carries out the reaction ATP + H2O = ADP + phosphate + H(+). Its function is as follows. ATP-dependent RNA helicase which is a subunit of the eIF4F complex involved in cap recognition and is required for mRNA binding to ribosome. In the current model of translation initiation, eIF4A unwinds RNA secondary structures in the 5'-UTR of mRNAs which is necessary to allow efficient binding of the small ribosomal subunit, and subsequent scanning for the initiator codon. The polypeptide is Probable eukaryotic initiation factor 4A (Leishmania infantum).